The chain runs to 152 residues: tRNA-specific adenosine deaminase (152 aa).

The CMP/dCMP-type deaminase domain maps to 2 to 111; it reads AERTHFMELA…AQDPKGGAVE (110 aa). Histidine 53 is a Zn(2+) binding site. Catalysis depends on glutamate 55, which acts as the Proton donor. 2 residues coordinate Zn(2+): cysteine 83 and cysteine 86.

The protein belongs to the cytidine and deoxycytidylate deaminase family. As to quaternary structure, homodimer. It depends on Zn(2+) as a cofactor.

It catalyses the reaction adenosine(34) in tRNA + H2O + H(+) = inosine(34) in tRNA + NH4(+). In terms of biological role, catalyzes the deamination of adenosine to inosine at the wobble position 34 of tRNA(Arg2). The polypeptide is tRNA-specific adenosine deaminase (Agrobacterium fabrum (strain C58 / ATCC 33970) (Agrobacterium tumefaciens (strain C58))).